A 173-amino-acid chain; its full sequence is Invasion protein B homolog BruAb1_0366 (173 aa).

The first 23 residues, 1-23, serve as a signal peptide directing secretion; that stretch reads MKNYRAIGLAFTFTALSSLSAFA.

This sequence belongs to the IalB family.

The sequence is that of Invasion protein B homolog BruAb1_0366 from Brucella abortus biovar 1 (strain 9-941).